A 235-amino-acid polypeptide reads, in one-letter code: Glucosamine-6-phosphate deaminase (235 aa).

Residue Asp62 is the Proton acceptor; for enolization step of the active site. The active-site For ring-opening step is Asn128. The Proton acceptor; for ring-opening step role is filled by His130. Residue Glu135 is the For ring-opening step of the active site.

The protein belongs to the glucosamine/galactosamine-6-phosphate isomerase family. NagB subfamily.

It carries out the reaction alpha-D-glucosamine 6-phosphate + H2O = beta-D-fructose 6-phosphate + NH4(+). It functions in the pathway amino-sugar metabolism; N-acetylneuraminate degradation; D-fructose 6-phosphate from N-acetylneuraminate: step 5/5. Its function is as follows. Catalyzes the reversible isomerization-deamination of glucosamine 6-phosphate (GlcN6P) to form fructose 6-phosphate (Fru6P) and ammonium ion. In Streptococcus pneumoniae (strain JJA), this protein is Glucosamine-6-phosphate deaminase.